The chain runs to 362 residues: GDSL esterase/lipase At5g18430 (362 aa).

A signal peptide spans 1 to 19 (MTISTVIAFMSMFLVFVMS). Ser-35 serves as the catalytic Nucleophile. A glycan (N-linked (GlcNAc...) asparagine) is linked at Asn-117. Residues Asp-327 and His-330 contribute to the active site. An N-linked (GlcNAc...) asparagine glycan is attached at Asn-355.

This sequence belongs to the 'GDSL' lipolytic enzyme family.

It is found in the secreted. This is GDSL esterase/lipase At5g18430 from Arabidopsis thaliana (Mouse-ear cress).